The sequence spans 423 residues: Glucose-1-phosphate adenylyltransferase (423 aa).

Alpha-D-glucose 1-phosphate-binding positions include Tyr108, Gly173, 188–189 (EK), and Ser207.

The protein belongs to the bacterial/plant glucose-1-phosphate adenylyltransferase family. Homotetramer.

It carries out the reaction alpha-D-glucose 1-phosphate + ATP + H(+) = ADP-alpha-D-glucose + diphosphate. It functions in the pathway glycan biosynthesis; glycogen biosynthesis. In terms of biological role, involved in the biosynthesis of ADP-glucose, a building block required for the elongation reactions to produce glycogen. Catalyzes the reaction between ATP and alpha-D-glucose 1-phosphate (G1P) to produce pyrophosphate and ADP-Glc. The chain is Glucose-1-phosphate adenylyltransferase from Francisella tularensis subsp. novicida (strain U112).